Consider the following 110-residue polypeptide: Translation initiation factor 1A 3 (110 aa).

The tract at residues 1 to 29 (MIRKRQSGSNKSVSSGNNQEVTRVRTPRK) is disordered. Positions 7 to 18 (SGSNKSVSSGNN) are enriched in low complexity. One can recognise an S1-like domain in the interval 22–96 (TRVRTPRKDR…SKADVIWKYT (75 aa)).

Belongs to the eIF-1A family.

Functionally, seems to be required for maximal rate of protein biosynthesis. Enhances ribosome dissociation into subunits and stabilizes the binding of the initiator Met-tRNA(I) to 40 S ribosomal subunits. The protein is Translation initiation factor 1A 3 (eIF1A3) of Methanosarcina acetivorans (strain ATCC 35395 / DSM 2834 / JCM 12185 / C2A).